The primary structure comprises 286 residues: MKTFLILVLLAIVATTATTAVRFPVPQLQPQNPSQQQPQEQVPLVQQQQFLGQQQPFPPQQPYPQPQPFPSQLPYLQLQPFPQPQLPYSQPQPFRPQQPYPQPQPQYSQPQQPISQQQQQQQQQQQQQQQQQQILQQILQQQLIPCMDVVLQQHNIAHGRSQVLQQSTYQLLQELCCQHLWQIPEQSQCQAIHNVVHAIILHQQQKQQQQPSSQVSFQQPLQQYPLGQGSFRPSQQNPQAQGSVQPQQLPQFEEIRNLALQTLPAMCNVYIPPYCTIAPFGIFGTN.

Positions 1 to 20 (MKTFLILVLLAIVATTATTA) are cleaved as a signal peptide. Positions 51 to 120 (LGQQQPFPPQ…QQPISQQQQQ (70 aa)) are disordered. A compositionally biased stretch (pro residues) spans 56–71 (PFPPQQPYPQPQPFPS). A compositionally biased stretch (low complexity) spans 72–92 (QLPYLQLQPFPQPQLPYSQPQ). The segment covering 93-104 (PFRPQQPYPQPQ) has biased composition (pro residues). Low complexity predominate over residues 105 to 120 (PQYSQPQQPISQQQQQ).

It belongs to the gliadin/glutenin family. Substrate of transglutaminase.

Its function is as follows. Gliadin is the major seed storage protein in wheat. The chain is Alpha/beta-gliadin from Triticum aestivum (Wheat).